Consider the following 125-residue polypeptide: uncharacterized protein (125 aa).

The protein resides in the plastid. The protein localises to the chloroplast. This is an uncharacterized protein from Guillardia theta (Cryptophyte).